We begin with the raw amino-acid sequence, 562 residues long: uncharacterized protein (562 aa).

This is an uncharacterized protein from Saccharolobus islandicus (Sulfolobus islandicus).